Reading from the N-terminus, the 186-residue chain is Translation initiation factor IF-3 (186 aa).

The interval M1 to L20 is disordered.

Belongs to the IF-3 family. In terms of assembly, monomer.

It is found in the cytoplasm. Functionally, IF-3 binds to the 30S ribosomal subunit and shifts the equilibrium between 70S ribosomes and their 50S and 30S subunits in favor of the free subunits, thus enhancing the availability of 30S subunits on which protein synthesis initiation begins. The chain is Translation initiation factor IF-3 from Borrelia duttonii (strain Ly).